The following is a 152-amino-acid chain: UPF0178 protein YaiI (152 aa).

The protein belongs to the UPF0178 family.

The protein is UPF0178 protein YaiI of Shigella boydii serotype 18 (strain CDC 3083-94 / BS512).